Consider the following 264-residue polypeptide: Phosphonates import ATP-binding protein PhnC (264 aa).

Residues 8–255 form the ABC transporter domain; the sequence is LQAENLRMTF…KLIEIYGPEF (248 aa). Position 40–47 (40–47) interacts with ATP; it reads GPSGSGKS.

It belongs to the ABC transporter superfamily. Phosphonates importer (TC 3.A.1.9.1) family. In terms of assembly, the complex is composed of two ATP-binding proteins (PhnC), two transmembrane proteins (PhnE) and a solute-binding protein (PhnD).

It localises to the cell inner membrane. The catalysed reaction is phosphonate(out) + ATP + H2O = phosphonate(in) + ADP + phosphate + H(+). Its function is as follows. Part of the ABC transporter complex PhnCDE involved in phosphonates import. Responsible for energy coupling to the transport system. The polypeptide is Phosphonates import ATP-binding protein PhnC (Maricaulis maris (strain MCS10) (Caulobacter maris)).